The following is a 335-amino-acid chain: Probable geranylgeranyl transferase type-2 subunit beta (335 aa).

5 PFTB repeats span residues 74 to 115 (TEEI…IIFN), 122 to 163 (ADTI…HLLG), 170 to 211 (IDSA…AIAG), 218 to 259 (RDRT…AILG), and 266 to 312 (SDAM…DDTL). Residues 196 to 198 (HSG) and 238 to 250 (RPEK…YSWW) contribute to the geranylgeranyl diphosphate site. D244, C246, and H296 together coordinate Zn(2+).

This sequence belongs to the protein prenyltransferase subunit beta family. In terms of assembly, heterodimer of an alpha and a beta subunit. It depends on Zn(2+) as a cofactor.

The enzyme catalyses geranylgeranyl diphosphate + L-cysteinyl-[protein] = S-geranylgeranyl-L-cysteinyl-[protein] + diphosphate. Catalyzes the transfer of a geranyl-geranyl moiety from geranyl-geranyl pyrophosphate to both cysteines in Rab proteins with an -XXCC, -XCXC and -CCXX C-terminal. The protein is Probable geranylgeranyl transferase type-2 subunit beta (ggtb-1) of Caenorhabditis elegans.